The following is a 59-amino-acid chain: Temporin-HN2 (59 aa).

The signal sequence occupies residues 1–22 (MFTLKKSLLLLLFLGTINLSLS). A coiled-coil region spans residues 16–44 (TINLSLSEQERDAKEERRDEMDVEVEKRN). A propeptide spanning residues 23 to 41 (EQERDAKEERRDEMDVEVE) is cleaved from the precursor. Leucine 57 bears the Leucine amide mark.

In terms of tissue distribution, expressed by the skin glands.

It is found in the secreted. Its function is as follows. Has antimicrobial activity against some Gram-positive bacteria and fungi but has no activity against a range of Gram-negative bacteria except P.faecalis. Active against the Gram-positive bacteria S.aureus ATCC 25923 (MIC=4.8 uM), S.carnosus KHS (MIC=19 uM), B.licheniformis X39 (MIC=19 uM) and R.rhodochrous X15 (MIC=2.4 uM) but is inactive against E.faecium 091299 and E.faecalis 981. Has a less potent antimicrobial activity against the Gram-negative bacterium P.faecalis X29 (MIC=37.5 uM) and is inactive against E.coli, P.aeruginosa and S.typhi. Has antifungal activity against C.albicans ATCC 2002 (MIC=9.5 uM) and is also active against the slime mold 090223 (MIC=9.5 uM). Has extremely low hemolytic activity against human erythrocytes (LC(50)=300 uM). The protein is Temporin-HN2 of Odorrana hainanensis (Odor frog).